The sequence spans 428 residues: MAKEKPHINIVFIGHVDHGKSTTIGRLLFDTANIPENIIKKFEEMGEKGKSFKFAWVMDRLKEERERGITIDVAHTKFETPHRYITIIDAPGHRDFVKNMITGASQADAAVLVVAVTDGVMPQTKEHAFLARTLGINNILVAVNKMDMVNYDEKKFKAVAEQVKKLLMMLGYKNFPIIPISAWEGDNVVKKSDKMPWYNGPTLIEALDQMPEPPKPTDKPLRIPIQDVYSIKGVGTVPVGRVETGVLRVGDVVIFEPASTIFHKPIQGEVKSIEMHHEPMQEALPGDNIGFNVRGVGKNDIKRGDVAGHTNNPPTVVRPKDTFKAQIIVLNHPTAITVGYTPVLHAHTLQVAVRFEQLLAKLDPRTGNIVEENPQFIKTGDSAIVVLRPTKPMVIEPVKEIPQMGRFAIRDMGQTVAAGMVISIQKAE.

The region spanning 5 to 215 (KPHINIVFIG…ALDQMPEPPK (211 aa)) is the tr-type G domain. The tract at residues 14-21 (GHVDHGKS) is G1. 14-21 (GHVDHGKS) is a GTP binding site. S21 serves as a coordination point for Mg(2+). Residues 68–72 (GITID) are G2. Positions 89-92 (DAPG) are G3. GTP-binding positions include 89–93 (DAPGH) and 144–147 (NKMD). The tract at residues 144–147 (NKMD) is G4. The G5 stretch occupies residues 181–183 (SAW).

This sequence belongs to the TRAFAC class translation factor GTPase superfamily. Classic translation factor GTPase family. EF-Tu/EF-1A subfamily.

The protein resides in the cytoplasm. It catalyses the reaction GTP + H2O = GDP + phosphate + H(+). Its function is as follows. GTP hydrolase that promotes the GTP-dependent binding of aminoacyl-tRNA to the A-site of ribosomes during protein biosynthesis. The polypeptide is Elongation factor 1-alpha (Thermococcus celer).